The chain runs to 323 residues: Calcium homeostasis modulator protein 2 (323 aa).

The Cytoplasmic portion of the chain corresponds to 1–21; that stretch reads MAALIAENFRFLSLFFKSKDV. Residues 14 to 39 are central pore; the sequence is LFFKSKDVMIFNGLVALGTVGSQELF. A helical membrane pass occupies residues 22–43; sequence MIFNGLVALGTVGSQELFSVVA. The Extracellular segment spans residues 44–52; it reads FHCPCSPAR. Disulfide bonds link cysteine 46-cysteine 130 and cysteine 48-cysteine 162. The chain crosses the membrane as a helical span at residues 53–76; it reads NYLYGLTAIGVPALALFLIGVILN. Topologically, residues 77–101 are cytoplasmic; sequence NHTWNLVAECQYRRAKNCSAAPNFL. The chain crosses the membrane as a helical span at residues 102-132; the sequence is LLSSILGRAAVAPVTWSVISLLRGEAYVCAL. Residues 133–179 are Extracellular-facing; the sequence is SEFVDPSSLTAGDKGFPPAHATEVLARFPCGEGPANLSSFREEVSRR. The hemichannel docking stretch occupies residues 145-152; the sequence is DKGFPPAH. The chain crosses the membrane as a helical span at residues 180-206; sequence LKYESQLFGWLLIGVVAILVFLTKCLK. At 207 to 323 the chain is on the cytoplasmic side; that stretch reads HYCSPLSYRQ…DNVEMALLTA (117 aa). The tract at residues 214 to 251 is intersubunit interaction; that stretch reads YRQEAYWAQYRTNEDQLFQRTAEVHSRVLAANNVRRFF.

The protein belongs to the CALHM family. Homo-undecamer. Two undecameric hemichannels can assemble in a head-to-head manner to form a gap junction. As to expression, neuron, astrocyte, and microglia.

The protein localises to the cell membrane. The enzyme catalyses ATP(in) = ATP(out). Its activity is regulated as follows. Inhibited by divalent cations such as Co(2+) and Ni(2+). Its function is as follows. Pore-forming subunit of Ca(2+) homeostasis modulator channels. Mediates ATP release from astrocytes and ATP-induced Ca(2+) influx in microglia thus regulating neuronal ATP and Ca(2+) homeostasis, synaptic transmission and neuroinflammatory response. May form intercellular gap junctions. The gating mechanism remains unknown. This is Calcium homeostasis modulator protein 2 from Mus musculus (Mouse).